The following is a 398-amino-acid chain: Na(+)/H(+) antiporter NhaA (398 aa).

11 helical membrane passes run 21-41, 66-86, 101-121, 132-152, 161-181, 184-204, 216-236, 274-294, 305-325, 343-363, and 374-394; these read LGGYVLMIAAVLALIVANSPL, VLHWINDGLMAVFFLLVGLEI, IVLPGVAAAGGMLMPALVYLL, GWAIPAATDIAFALGILALLG, IFLTALAILDDLGAIAIIAVF, AELNTSALAAAGGLLAALCVL, LLVGALLWYFVLKSGVHATLA, LLIVPVFGFANAGVSFDGMGI, IALGLFLGKQLGVFGFAWLAI, GVALLCGIGFTMSLFIGALAF, and IGVLTGSLVSAVLGYALLRVL.

The protein belongs to the NhaA Na(+)/H(+) (TC 2.A.33) antiporter family.

It localises to the cell inner membrane. The enzyme catalyses Na(+)(in) + 2 H(+)(out) = Na(+)(out) + 2 H(+)(in). Its function is as follows. Na(+)/H(+) antiporter that extrudes sodium in exchange for external protons. This Bordetella bronchiseptica (strain ATCC BAA-588 / NCTC 13252 / RB50) (Alcaligenes bronchisepticus) protein is Na(+)/H(+) antiporter NhaA.